The primary structure comprises 65 residues: Large ribosomal subunit protein bL35 (65 aa).

This sequence belongs to the bacterial ribosomal protein bL35 family.

This chain is Large ribosomal subunit protein bL35, found in Synechococcus sp. (strain CC9311).